The sequence spans 416 residues: Pigment epithelium-derived factor (416 aa).

The signal sequence occupies residues 1–20 (MQALVLLLWTGALLGFGRCQ). 2 positions are modified to phosphoserine: serine 112 and serine 225. N-linked (GlcNAc...) asparagine glycosylation occurs at asparagine 283.

It belongs to the serpin family. In terms of assembly, interacts with PNPLA2; this interaction stimulates the phospholipase A2 activity of PNPLA2. Retinal pigment epithelial cells. Located in the interphotoreceptor matrix (IPM) which is between the retinal pigment epithelium and the neural retina.

Its subcellular location is the secreted. It is found in the melanosome. Functionally, neurotrophic protein; induces extensive neuronal differentiation in retinoblastoma cells. Potent inhibitor of angiogenesis. As it does not undergo the S (stressed) to R (relaxed) conformational transition characteristic of active serpins, it exhibits no serine protease inhibitory activity. The protein is Pigment epithelium-derived factor (SERPINF1) of Bos taurus (Bovine).